Reading from the N-terminus, the 217-residue chain is Pyridoxine/pyridoxamine 5'-phosphate oxidase (217 aa).

Residues 13 to 16 and Lys71 contribute to the substrate site; that span reads RREY. FMN is bound by residues 66 to 71, 81 to 82, Arg87, Lys88, and Gln110; these read RIVLLK and YT. The substrate site is built by Tyr128, Arg132, and Ser136. FMN is bound by residues 145 to 146 and Trp190; that span reads QS. 196–198 contacts substrate; it reads RLH. Residue Arg200 participates in FMN binding.

It belongs to the pyridoxamine 5'-phosphate oxidase family. Homodimer. FMN is required as a cofactor.

It catalyses the reaction pyridoxamine 5'-phosphate + O2 + H2O = pyridoxal 5'-phosphate + H2O2 + NH4(+). It carries out the reaction pyridoxine 5'-phosphate + O2 = pyridoxal 5'-phosphate + H2O2. The protein operates within cofactor metabolism; pyridoxal 5'-phosphate salvage; pyridoxal 5'-phosphate from pyridoxamine 5'-phosphate: step 1/1. It participates in cofactor metabolism; pyridoxal 5'-phosphate salvage; pyridoxal 5'-phosphate from pyridoxine 5'-phosphate: step 1/1. Catalyzes the oxidation of either pyridoxine 5'-phosphate (PNP) or pyridoxamine 5'-phosphate (PMP) into pyridoxal 5'-phosphate (PLP). The polypeptide is Pyridoxine/pyridoxamine 5'-phosphate oxidase (Photorhabdus laumondii subsp. laumondii (strain DSM 15139 / CIP 105565 / TT01) (Photorhabdus luminescens subsp. laumondii)).